Reading from the N-terminus, the 57-residue chain is Enolase (57 aa).

E25 functions as the Proton donor in the catalytic mechanism.

Belongs to the enolase family. Requires Mg(2+) as cofactor.

It is found in the cytoplasm. The protein localises to the secreted. The protein resides in the cell surface. It catalyses the reaction (2R)-2-phosphoglycerate = phosphoenolpyruvate + H2O. The protein operates within carbohydrate degradation; glycolysis; pyruvate from D-glyceraldehyde 3-phosphate: step 4/5. Functionally, catalyzes the reversible conversion of 2-phosphoglycerate (2-PG) into phosphoenolpyruvate (PEP). It is essential for the degradation of carbohydrates via glycolysis. In Clostridioides difficile (Peptoclostridium difficile), this protein is Enolase.